A 423-amino-acid polypeptide reads, in one-letter code: Histidine--tRNA ligase 2 (423 aa).

This sequence belongs to the class-II aminoacyl-tRNA synthetase family. In terms of assembly, homodimer.

The protein localises to the cytoplasm. The enzyme catalyses tRNA(His) + L-histidine + ATP = L-histidyl-tRNA(His) + AMP + diphosphate + H(+). This Bacillus cereus (strain ATCC 14579 / DSM 31 / CCUG 7414 / JCM 2152 / NBRC 15305 / NCIMB 9373 / NCTC 2599 / NRRL B-3711) protein is Histidine--tRNA ligase 2.